A 431-amino-acid polypeptide reads, in one-letter code: Glutamate-1-semialdehyde 2,1-aminomutase (431 aa).

K266 carries the N6-(pyridoxal phosphate)lysine modification.

The protein belongs to the class-III pyridoxal-phosphate-dependent aminotransferase family. HemL subfamily. As to quaternary structure, homodimer. Pyridoxal 5'-phosphate is required as a cofactor.

The protein localises to the cytoplasm. It carries out the reaction (S)-4-amino-5-oxopentanoate = 5-aminolevulinate. Its pathway is porphyrin-containing compound metabolism; protoporphyrin-IX biosynthesis; 5-aminolevulinate from L-glutamyl-tRNA(Glu): step 2/2. The sequence is that of Glutamate-1-semialdehyde 2,1-aminomutase from Wolinella succinogenes (strain ATCC 29543 / DSM 1740 / CCUG 13145 / JCM 31913 / LMG 7466 / NCTC 11488 / FDC 602W) (Vibrio succinogenes).